The following is a 238-amino-acid chain: Ribose-5-phosphate isomerase A (238 aa).

Substrate contacts are provided by residues 30–33, 87–90, and 100–103; these read SGST, DGAD, and KGGG. Glu109 functions as the Proton acceptor in the catalytic mechanism. Lys127 contacts substrate.

It belongs to the ribose 5-phosphate isomerase family. In terms of assembly, homodimer.

The catalysed reaction is aldehydo-D-ribose 5-phosphate = D-ribulose 5-phosphate. It functions in the pathway carbohydrate degradation; pentose phosphate pathway; D-ribose 5-phosphate from D-ribulose 5-phosphate (non-oxidative stage): step 1/1. Catalyzes the reversible conversion of ribose-5-phosphate to ribulose 5-phosphate. The chain is Ribose-5-phosphate isomerase A from Synechococcus sp. (strain CC9311).